The primary structure comprises 309 residues: Ribonuclease Z (309 aa).

Residues H63, H65, D67, H68, H141, D208, and H266 each coordinate Zn(2+). D67 functions as the Proton acceptor in the catalytic mechanism.

The protein belongs to the RNase Z family. Homodimer. Zn(2+) is required as a cofactor.

The catalysed reaction is Endonucleolytic cleavage of RNA, removing extra 3' nucleotides from tRNA precursor, generating 3' termini of tRNAs. A 3'-hydroxy group is left at the tRNA terminus and a 5'-phosphoryl group is left at the trailer molecule.. Its function is as follows. Zinc phosphodiesterase, which displays some tRNA 3'-processing endonuclease activity. Probably involved in tRNA maturation, by removing a 3'-trailer from precursor tRNA. The protein is Ribonuclease Z of Salinispora arenicola (strain CNS-205).